A 565-amino-acid chain; its full sequence is Oxygen-dependent choline dehydrogenase (565 aa).

7–36 (DYIICGAGSAGNVLATRLTEDPDVTVLLLE) serves as a coordination point for FAD. His-474 serves as the catalytic Proton acceptor.

Belongs to the GMC oxidoreductase family. It depends on FAD as a cofactor.

The catalysed reaction is choline + A = betaine aldehyde + AH2. It carries out the reaction betaine aldehyde + NAD(+) + H2O = glycine betaine + NADH + 2 H(+). It functions in the pathway amine and polyamine biosynthesis; betaine biosynthesis via choline pathway; betaine aldehyde from choline (cytochrome c reductase route): step 1/1. Involved in the biosynthesis of the osmoprotectant glycine betaine. Catalyzes the oxidation of choline to betaine aldehyde and betaine aldehyde to glycine betaine at the same rate. The polypeptide is Oxygen-dependent choline dehydrogenase (Burkholderia thailandensis (strain ATCC 700388 / DSM 13276 / CCUG 48851 / CIP 106301 / E264)).